The primary structure comprises 296 residues: 4-hydroxy-tetrahydrodipicolinate synthase (296 aa).

Residue Thr49 participates in pyruvate binding. Residue Tyr137 is the Proton donor/acceptor of the active site. The active-site Schiff-base intermediate with substrate is Lys165. Val207 contributes to the pyruvate binding site.

This sequence belongs to the DapA family. As to quaternary structure, homotetramer; dimer of dimers.

The protein localises to the cytoplasm. It carries out the reaction L-aspartate 4-semialdehyde + pyruvate = (2S,4S)-4-hydroxy-2,3,4,5-tetrahydrodipicolinate + H2O + H(+). It participates in amino-acid biosynthesis; L-lysine biosynthesis via DAP pathway; (S)-tetrahydrodipicolinate from L-aspartate: step 3/4. Catalyzes the condensation of (S)-aspartate-beta-semialdehyde [(S)-ASA] and pyruvate to 4-hydroxy-tetrahydrodipicolinate (HTPA). The sequence is that of 4-hydroxy-tetrahydrodipicolinate synthase from Nitrobacter hamburgensis (strain DSM 10229 / NCIMB 13809 / X14).